A 115-amino-acid chain; its full sequence is Large ribosomal subunit protein bL20 (115 aa).

This sequence belongs to the bacterial ribosomal protein bL20 family.

Functionally, binds directly to 23S ribosomal RNA and is necessary for the in vitro assembly process of the 50S ribosomal subunit. It is not involved in the protein synthesizing functions of that subunit. This Malacoplasma penetrans (strain HF-2) (Mycoplasma penetrans) protein is Large ribosomal subunit protein bL20.